The primary structure comprises 1320 residues: CAP-Gly domain-containing linker protein 1 (1320 aa).

The segment at M1–E53 is disordered. The segment covering T21–K35 has biased composition (low complexity). Residue S48 is modified to Phosphoserine. Residue T50 is modified to Phosphothreonine. The CAP-Gly 1 domain maps to G78 to R120. An important for tubulin binding region spans residues G97–G101. S146 is modified (phosphoserine). The segment covering V156 to S171 has biased composition (polar residues). The interval V156–T181 is disordered. T181 carries the phosphothreonine modification. S194, S196, S199, and S203 each carry phosphoserine. Residues G231 to P273 enclose the CAP-Gly 2 domain. Low complexity predominate over residues T301 to R331. The interval T301 to T338 is disordered. S309 carries the post-translational modification Phosphoserine. S311 carries the phosphoserine; by PKA modification. Phosphoserine occurs at positions 314 and 347. The disordered stretch occupies residues S1089 to A1109. The span at R1096–A1109 shows a compositional bias: basic and acidic residues. S1116 bears the Phosphoserine mark. The interval K1178–S1201 is disordered. Polar residues predominate over residues Q1180–V1190. S1246 carries the post-translational modification Phosphoserine. Residues P1299–D1316 form a CCHC-type zinc finger.

As to quaternary structure, interacts with MTOR; phosphorylates and regulates CLIP1. Interacts (via CAP-Gly domains) with tubulin and TUBA1B. Interacts with SLAIN2. Interacts with MAPRE1 and MAPRE3. Interacts (via zinc finger) with DCTN1. Binds preferentially to tyrosinated microtubules, and only marginally to detyrosinated microtubules. Post-translationally, phosphorylated. Phosphorylation induces conformational changes by increasing the affinity of the N-terminus for C-terminus, resulting in inhibition of its function thus decreasing its binding to microtubules and DCTN1. Exhibits a folded, autoinhibited conformation when phosphorylated and an open conformation when dephosphorylated with increased binding affinity to microtubules and DCTN1. Phosphorylation regulates its recruitment to tyrosinated microtubules and the recruitment of vesicular cargo to microtubules in neurons. Phosphorylation by MTOR may positively regulate CLIP1 association with microtubules.

Its subcellular location is the cytoplasm. It localises to the cytoskeleton. The protein localises to the cytoplasmic vesicle membrane. The protein resides in the cell projection. It is found in the ruffle. In terms of biological role, binds to the plus end of microtubules and regulates the dynamics of the microtubule cytoskeleton. Promotes microtubule growth and microtubule bundling. Links cytoplasmic vesicles to microtubules and thereby plays an important role in intracellular vesicle trafficking. Plays a role macropinocytosis and endosome trafficking. The polypeptide is CAP-Gly domain-containing linker protein 1 (Clip1) (Rattus norvegicus (Rat)).